A 138-amino-acid chain; its full sequence is Large ribosomal subunit protein uL16 (138 aa).

Basic residues predominate over residues 1 to 15 (MLSPKKVKYRKKQRG). A disordered region spans residues 1–20 (MLSPKKVKYRKKQRGRLSGE).

This sequence belongs to the universal ribosomal protein uL16 family. As to quaternary structure, part of the 50S ribosomal subunit.

Binds 23S rRNA and is also seen to make contacts with the A and possibly P site tRNAs. The protein is Large ribosomal subunit protein uL16 of Borrelia hermsii (strain HS1 / DAH).